A 321-amino-acid chain; its full sequence is Malate dehydrogenase (321 aa).

Residues glycine 10–glycine 15 and aspartate 34 contribute to the NAD(+) site. Positions 83 and 89 each coordinate substrate. NAD(+)-binding positions include asparagine 96 and isoleucine 119 to asparagine 121. Substrate is bound by residues asparagine 121 and arginine 152. The Proton acceptor role is filled by histidine 176.

Belongs to the LDH/MDH superfamily. MDH type 3 family.

It carries out the reaction (S)-malate + NAD(+) = oxaloacetate + NADH + H(+). Functionally, catalyzes the reversible oxidation of malate to oxaloacetate. This chain is Malate dehydrogenase, found in Methylocella silvestris (strain DSM 15510 / CIP 108128 / LMG 27833 / NCIMB 13906 / BL2).